Here is a 365-residue protein sequence, read N- to C-terminus: DNA replication and repair protein RecF (365 aa).

30 to 37 contributes to the ATP binding site; the sequence is GENGQGKT.

The protein belongs to the RecF family.

It is found in the cytoplasm. The RecF protein is involved in DNA metabolism; it is required for DNA replication and normal SOS inducibility. RecF binds preferentially to single-stranded, linear DNA. It also seems to bind ATP. The protein is DNA replication and repair protein RecF of Desulfitobacterium hafniense (strain DSM 10664 / DCB-2).